The following is a 178-amino-acid chain: Large ribosomal subunit protein uL10 (178 aa).

The protein belongs to the universal ribosomal protein uL10 family. Part of the ribosomal stalk of the 50S ribosomal subunit. The N-terminus interacts with L11 and the large rRNA to form the base of the stalk. The C-terminus forms an elongated spine to which L12 dimers bind in a sequential fashion forming a multimeric L10(L12)X complex.

Its function is as follows. Forms part of the ribosomal stalk, playing a central role in the interaction of the ribosome with GTP-bound translation factors. This chain is Large ribosomal subunit protein uL10, found in Leuconostoc mesenteroides subsp. mesenteroides (strain ATCC 8293 / DSM 20343 / BCRC 11652 / CCM 1803 / JCM 6124 / NCDO 523 / NBRC 100496 / NCIMB 8023 / NCTC 12954 / NRRL B-1118 / 37Y).